Reading from the N-terminus, the 473-residue chain is Catalase easC (473 aa).

Residues 1 to 15 (MASEVSVASSGSEHS) show a composition bias toward low complexity. The segment at 1-31 (MASEVSVASSGSEHSGAQKCPFQDPGLSSMD) is disordered. His54 is a catalytic residue. Tyr344 serves as a coordination point for heme. The interval 369-388 (DGARPEKAEMAPQKVPSQEH) is disordered.

It belongs to the catalase family. It depends on heme as a cofactor.

The protein operates within alkaloid biosynthesis; ergot alkaloid biosynthesis. Its function is as follows. Catalase; part of the gene cluster that mediates the biosynthesis of fungal ergot alkaloid. DmaW catalyzes the first step of ergot alkaloid biosynthesis by condensing dimethylallyl diphosphate (DMAP) and tryptophan to form 4-dimethylallyl-L-tryptophan. The second step is catalyzed by the methyltransferase easF that methylates 4-dimethylallyl-L-tryptophan in the presence of S-adenosyl-L-methionine, resulting in the formation of 4-dimethylallyl-L-abrine. The catalase easC and the FAD-dependent oxidoreductase easE then transform 4-dimethylallyl-L-abrine to chanoclavine-I which is further oxidized by easD in the presence of NAD(+), resulting in the formation of chanoclavine-I aldehyde. Agroclavine dehydrogenase easG then mediates the conversion of chanoclavine-I aldehyde to agroclavine via a non-enzymatic adduct reaction: the substrate is an iminium intermediate that is formed spontaneously from chanoclavine-I aldehyde in the presence of glutathione. The presence of easA is not required to complete this reaction. Further conversion of agroclavine to paspalic acid is a two-step process involving oxidation of agroclavine to elymoclavine and of elymoclavine to paspalic acid, the second step being performed by the elymoclavine oxidase cloA. Paspalic acid is then further converted to D-lysergic acid. Ergopeptines are assembled from D-lysergic acid and three different amino acids by the D-lysergyl-peptide-synthetases composed each of a monomudular and a trimodular nonribosomal peptide synthetase subunit. LpsB and lpsC encode the monomodular subunits responsible for D-lysergic acid activation and incorporation into the ergopeptine backbone. LpsA1 and A2 subunits encode the trimodular nonribosomal peptide synthetase assembling the tripeptide portion of ergopeptines. LpsA1 is responsible for formation of the major ergopeptine, ergotamine, and lpsA2 for alpha-ergocryptine, the minor ergopeptine of the total alkaloid mixture elaborated by C.purpurea. D-lysergyl-tripeptides are assembled by the nonribosomal peptide synthetases and released as N-(D-lysergyl-aminoacyl)-lactams. Cyclolization of the D-lysergyl-tripeptides is performed by the Fe(2+)/2-ketoglutarate-dependent dioxygenase easH which introduces a hydroxyl group into N-(D-lysergyl-aminoacyl)-lactam at alpha-C of the aminoacyl residue followed by spontaneous condensation with the terminal lactam carbonyl group. The protein is Catalase easC of Claviceps purpurea (Ergot fungus).